Reading from the N-terminus, the 666-residue chain is Probable potassium transport system protein Kup (666 aa).

12 helical membrane passes run 16 to 36, 58 to 78, 99 to 119, 141 to 161, 167 to 187, 221 to 241, 253 to 273, 292 to 312, 343 to 363, 373 to 393, 402 to 422, and 424 to 444; these read GFII…LYTM, ISLI…LVAL, TPWL…DGAL, IFQN…LLFA, TGVI…FLGI, IFIL…YSDL, WPFV…WILA, FTMH…QALI, TYIP…VLLF, YGLA…FFLI, VLLM…ASAV, and FMHG…IMTI.

The protein belongs to the HAK/KUP transporter (TC 2.A.72) family.

Its subcellular location is the cell membrane. The catalysed reaction is K(+)(in) + H(+)(in) = K(+)(out) + H(+)(out). Functionally, transport of potassium into the cell. Likely operates as a K(+):H(+) symporter. The polypeptide is Probable potassium transport system protein Kup (Streptococcus agalactiae serotype Ia (strain ATCC 27591 / A909 / CDC SS700)).